A 68-amino-acid chain; its full sequence is Probable Sec-independent protein translocase protein TatE (68 aa).

The helical transmembrane segment at 1 to 21 (MGEISITKLLVVAALIILVFG) threads the bilayer. The tract at residues 43-68 (MNEDDDSAKKTTAEEEAPAQKLSHKE) is disordered.

Belongs to the TatA/E family. TatE subfamily.

It is found in the cell inner membrane. In terms of biological role, part of the twin-arginine translocation (Tat) system that transports large folded proteins containing a characteristic twin-arginine motif in their signal peptide across membranes. TatE shares overlapping functions with TatA. This is Probable Sec-independent protein translocase protein TatE from Klebsiella pneumoniae subsp. pneumoniae (strain ATCC 700721 / MGH 78578).